A 191-amino-acid polypeptide reads, in one-letter code: Fe/S biogenesis protein NfuA (191 aa).

C149 and C152 together coordinate [4Fe-4S] cluster.

This sequence belongs to the NfuA family. Homodimer. [4Fe-4S] cluster is required as a cofactor.

Its function is as follows. Involved in iron-sulfur cluster biogenesis. Binds a 4Fe-4S cluster, can transfer this cluster to apoproteins, and thereby intervenes in the maturation of Fe/S proteins. Could also act as a scaffold/chaperone for damaged Fe/S proteins. The chain is Fe/S biogenesis protein NfuA from Salmonella typhi.